The chain runs to 315 residues: Transmembrane protein 231 (315 aa).

The chain crosses the membrane as a helical span at residues 23-43; the sequence is AALFLLLTTALTYIPPLLVAF. N-linked (GlcNAc...) asparagine glycans are attached at residues Asn-194, Asn-199, and Asn-221. The helical transmembrane segment at 262–282 threads the bilayer; the sequence is FWEMIKFAWIQYVSILLIFLW.

Belongs to the TMEM231 family. Part of the tectonic-like complex (also named B9 complex). Interacts with TMEM107.

Its subcellular location is the cell projection. It localises to the cilium membrane. Transmembrane component of the tectonic-like complex, a complex localized at the transition zone of primary cilia and acting as a barrier that prevents diffusion of transmembrane proteins between the cilia and plasma membranes. Required for ciliogenesis and sonic hedgehog/SHH signaling. This Mus musculus (Mouse) protein is Transmembrane protein 231 (Tmem231).